The chain runs to 952 residues: Glycine dehydrogenase (decarboxylating) (952 aa).

N6-(pyridoxal phosphate)lysine is present on K703.

The protein belongs to the GcvP family. As to quaternary structure, the glycine cleavage system is composed of four proteins: P, T, L and H. Pyridoxal 5'-phosphate is required as a cofactor.

The catalysed reaction is N(6)-[(R)-lipoyl]-L-lysyl-[glycine-cleavage complex H protein] + glycine + H(+) = N(6)-[(R)-S(8)-aminomethyldihydrolipoyl]-L-lysyl-[glycine-cleavage complex H protein] + CO2. In terms of biological role, the glycine cleavage system catalyzes the degradation of glycine. The P protein binds the alpha-amino group of glycine through its pyridoxal phosphate cofactor; CO(2) is released and the remaining methylamine moiety is then transferred to the lipoamide cofactor of the H protein. The protein is Glycine dehydrogenase (decarboxylating) of Mycobacterium leprae (strain Br4923).